We begin with the raw amino-acid sequence, 267 residues long: Phosphatidylglycerol--prolipoprotein diacylglyceryl transferase (267 aa).

Helical transmembrane passes span 10–30 (VAIALGPFKVHWYGLMYVVGF), 54–74 (LLFYGALGVVLGGRVGYALFY), 90–110 (WDGGMSFHGGLIGVLIAAWLF), and 116–136 (LAFFQLTDFVAPLVPLGLGAG). Position 137 (R137) interacts with a 1,2-diacyl-sn-glycero-3-phospho-(1'-sn-glycerol). The next 3 helical transmembrane spans lie at 169-189 (PSPLYEFALEGVVMFVVLWWV), 197-217 (GMISGLFLLLYAVFRFSVEFV), and 231-251 (WLTMGQLLTVPMALAGIALCV).

It belongs to the Lgt family.

The protein localises to the cell inner membrane. It catalyses the reaction L-cysteinyl-[prolipoprotein] + a 1,2-diacyl-sn-glycero-3-phospho-(1'-sn-glycerol) = an S-1,2-diacyl-sn-glyceryl-L-cysteinyl-[prolipoprotein] + sn-glycerol 1-phosphate + H(+). It functions in the pathway protein modification; lipoprotein biosynthesis (diacylglyceryl transfer). Catalyzes the transfer of the diacylglyceryl group from phosphatidylglycerol to the sulfhydryl group of the N-terminal cysteine of a prolipoprotein, the first step in the formation of mature lipoproteins. The chain is Phosphatidylglycerol--prolipoprotein diacylglyceryl transferase from Chromohalobacter salexigens (strain ATCC BAA-138 / DSM 3043 / CIP 106854 / NCIMB 13768 / 1H11).